The following is a 225-amino-acid chain: C-type lectin domain-containing protein 91 (225 aa).

The signal sequence occupies residues 1-21 (MRSTYILIIVPLIIIGGGVVA). The region spanning 85-215 (YSDSCYFIET…CTMAFKSICE (131 aa)) is the C-type lectin domain. 2 cysteine pairs are disulfide-bonded: Cys106–Cys214 and Cys185–Cys206. The N-linked (GlcNAc...) asparagine glycan is linked to Asn217.

It is found in the secreted. The chain is C-type lectin domain-containing protein 91 (clec-91) from Caenorhabditis elegans.